Consider the following 135-residue polypeptide: Poly [ADP-ribose] polymerase 1 (135 aa).

A PARP alpha-helical domain is found at 1 to 21 (QAKVEMLDNLLDIEVAYSLLK). Residues 30 to 135 (DPIDINYEKL…APVTGYMFGK (106 aa)) enclose the PARP catalytic domain. NAD(+) is bound by residues 104 to 106 (HGS), Gly113, and Arg120. Lys135 is an active-site residue.

The protein belongs to the ARTD/PARP family. As to quaternary structure, homodimer; PARP-type zinc-fingers from separate parp1 molecules form a dimer module that specifically recognizes DNA strand breaks. In terms of processing, poly-ADP-ribosylated on serine, glutamate and aspartate residues by autocatalysis. Auto-ADP-ribosylation on serine takes place following interaction with HPF1. Auto poly-ADP-ribosylation on serine residues promotes its dissociation from chromatin.

The protein localises to the chromosome. It localises to the nucleus. The protein resides in the nucleolus. It is found in the cytoplasm. Its subcellular location is the cytosol. It catalyses the reaction NAD(+) + (ADP-D-ribosyl)n-acceptor = nicotinamide + (ADP-D-ribosyl)n+1-acceptor + H(+).. The catalysed reaction is L-seryl-[protein] + NAD(+) = O-(ADP-D-ribosyl)-L-seryl-[protein] + nicotinamide + H(+). The enzyme catalyses L-aspartyl-[protein] + NAD(+) = 4-O-(ADP-D-ribosyl)-L-aspartyl-[protein] + nicotinamide. It carries out the reaction L-glutamyl-[protein] + NAD(+) = 5-O-(ADP-D-ribosyl)-L-glutamyl-[protein] + nicotinamide. It catalyses the reaction L-tyrosyl-[protein] + NAD(+) = O-(ADP-D-ribosyl)-L-tyrosyl-[protein] + nicotinamide + H(+). The catalysed reaction is L-histidyl-[protein] + NAD(+) = N(tele)-(ADP-D-ribosyl)-L-histidyl-[protein] + nicotinamide + H(+). ADP-ribosyltransferase activity is regulated via an allosteric activation mechanism. In absence of activation signal, parp1 is autoinhibited by the PARP alpha-helical domain (also named HD region), which prevents effective NAD(+)-binding. Activity is highly stimulated by signals, such as DNA strand breaks. Binding to damaged DNA unfolds the PARP alpha-helical domain, relieving autoinhibition. Poly-ADP-ribosyltransferase activity is tightly regulated and parp1 is removed from damaged chromatin following initial poly-ADP-ribosylation of chromatin to avoid prolonged residence (trapping) that has cytotoxic consequences. A number of factors or post-translational modifications (auto-poly-ADP-ribosylation) promote parp1 removal from chromatin. Its function is as follows. Poly-ADP-ribosyltransferase that mediates poly-ADP-ribosylation of proteins and plays a key role in DNA repair. Mediates glutamate, aspartate, serine, histidine or tyrosine ADP-ribosylation of proteins: the ADP-D-ribosyl group of NAD(+) is transferred to the acceptor carboxyl group of target residues and further ADP-ribosyl groups are transferred to the 2'-position of the terminal adenosine moiety, building up a polymer with an average chain length of 20-30 units. Serine ADP-ribosylation of proteins constitutes the primary form of ADP-ribosylation of proteins in response to DNA damage. Specificity for the different amino acids is conferred by interacting factors, such as hpf1 and nmnat1. Following interaction with hpf1, catalyzes serine ADP-ribosylation of target proteins; hpf1 confers serine specificity by completing the parp1 active site. Also catalyzes tyrosine ADP-ribosylation of target proteins following interaction with hpf1. Following interaction with nmnat1, catalyzes glutamate and aspartate ADP-ribosylation of target proteins; nmnat1 confers glutamate and aspartate specificity. Parp1 initiates the repair of DNA breaks: recognizes and binds DNA breaks within chromatin and recruits hpf1, licensing serine ADP-ribosylation of target proteins, such as histones (H2BS6ADPr and H3S10ADPr), thereby promoting decompaction of chromatin and the recruitment of repair factors leading to the reparation of DNA strand breaks. In addition to base excision repair (BER) pathway, also involved in double-strand breaks (DSBs) repair. Mediates the poly-ADP-ribosylation of a number of proteins. In addition to proteins, also able to ADP-ribosylate DNA: catalyzes ADP-ribosylation of DNA strand break termini containing terminal phosphates and a 2'-OH group in single- and double-stranded DNA, respectively. Parp1-mediated DNA repair in neurons plays a role in sleep: senses DNA damage in neurons and promotes sleep, facilitating efficient DNA repair. In addition to DNA repair, also involved in other processes, such as transcription regulation, programmed cell death, membrane repair, adipogenesis and innate immunity. Acts as a repressor of transcription: binds to nucleosomes and modulates chromatin structure in a manner similar to histone H1, thereby altering RNA polymerase II. Acts both as a positive and negative regulator of transcription elongation, depending on the context. Poly-ADP-ribose chains generated by parp1 also play a role in poly-ADP-ribose-dependent cell death, a process named parthanatos. Also acts as a negative regulator of the cGAS-STING pathway by mediating poly-ADP-ribosylation and inactivation of cgas. Acts as a negative regulator of adipogenesis by catalyzing poly ADP-ribosylation of histone H2B on 'Glu-35' (H2BE35ADPr). In Oncorhynchus masou (Cherry salmon), this protein is Poly [ADP-ribose] polymerase 1 (parp1).